The primary structure comprises 265 residues: Adenosylcobinamide-GDP ribazoletransferase (265 aa).

A run of 4 helical transmembrane segments spans residues 51 to 71 (LVGVILGVLCALVFYFTQLIF), 72 to 92 (PDSVAIVLTMAFSLLLTGAFH), 121 to 140 (IGTYGAATLVMALLAKFVLW), and 203 to 223 (VASLFLGVIQTSFIVIVLFAF).

Belongs to the CobS family. Mg(2+) is required as a cofactor.

It is found in the cell inner membrane. It catalyses the reaction alpha-ribazole + adenosylcob(III)inamide-GDP = adenosylcob(III)alamin + GMP + H(+). The catalysed reaction is alpha-ribazole 5'-phosphate + adenosylcob(III)inamide-GDP = adenosylcob(III)alamin 5'-phosphate + GMP + H(+). The protein operates within cofactor biosynthesis; adenosylcobalamin biosynthesis; adenosylcobalamin from cob(II)yrinate a,c-diamide: step 7/7. Functionally, joins adenosylcobinamide-GDP and alpha-ribazole to generate adenosylcobalamin (Ado-cobalamin). Also synthesizes adenosylcobalamin 5'-phosphate from adenosylcobinamide-GDP and alpha-ribazole 5'-phosphate. This chain is Adenosylcobinamide-GDP ribazoletransferase, found in Vibrio parahaemolyticus serotype O3:K6 (strain RIMD 2210633).